We begin with the raw amino-acid sequence, 299 residues long: UTP--glucose-1-phosphate uridylyltransferase 1 (299 aa).

Belongs to the UDPGP type 2 family.

The catalysed reaction is alpha-D-glucose 1-phosphate + UTP + H(+) = UDP-alpha-D-glucose + diphosphate. It participates in carbohydrate metabolism; nucleotide-sugar metabolism. The polypeptide is UTP--glucose-1-phosphate uridylyltransferase 1 (hasC1) (Streptococcus pyogenes serotype M6 (strain ATCC BAA-946 / MGAS10394)).